Here is a 353-residue protein sequence, read N- to C-terminus: Protein RecA (353 aa).

ATP is bound at residue Gly-64–Thr-71. Positions Leu-331–Glu-353 are disordered. Positions Ser-335–Lys-346 are enriched in basic and acidic residues.

The protein belongs to the RecA family.

It is found in the cytoplasm. Its function is as follows. Can catalyze the hydrolysis of ATP in the presence of single-stranded DNA, the ATP-dependent uptake of single-stranded DNA by duplex DNA, and the ATP-dependent hybridization of homologous single-stranded DNAs. It interacts with LexA causing its activation and leading to its autocatalytic cleavage. This chain is Protein RecA, found in Macrococcus caseolyticus (strain JCSC5402) (Macrococcoides caseolyticum).